A 131-amino-acid polypeptide reads, in one-letter code: Profilin (131 aa).

A disulfide bridge links C13 with C115. The short motif at A81–T97 is the Involved in PIP2 interaction element. At T111 the chain carries Phosphothreonine.

Belongs to the profilin family. Occurs in many kinds of cells as a complex with monomeric actin in a 1:1 ratio.

It is found in the cytoplasm. It localises to the cytoskeleton. Functionally, binds to actin and affects the structure of the cytoskeleton. At high concentrations, profilin prevents the polymerization of actin, whereas it enhances it at low concentrations. The polypeptide is Profilin (Phoenix dactylifera (Date palm)).